The sequence spans 301 residues: Type II restriction enzyme BslI subunit beta (301 aa).

Residues 62–82 form a CHC2-type zinc finger; sequence CPDGHTKWNQNLTKEMTCSEC.

As to quaternary structure, heterotetramer of two alpha and two beta subunits. The alpha subunit is believed to be responsible for DNA recognition, while the beta subunit is thought to mediate cleavage. Requires Zn(2+) as cofactor.

It catalyses the reaction Endonucleolytic cleavage of DNA to give specific double-stranded fragments with terminal 5'-phosphates.. In terms of biological role, a P subtype restriction enzyme that recognizes the double-stranded sequence 5'-CCN(7)GG-3' and cleaves after N-7. This chain is Type II restriction enzyme BslI subunit beta, found in Bacillus sp. (strain NEB-606).